Consider the following 455-residue polypeptide: MISVFDMFKVGIGPSSSHTVGPMKAGKQFIDDLIKRNQFEQTTEIHVDVYGSLSMTGRGHSTDIAIIMGLAGYLPHNVDIDMISGFIEKVKQTALLPINVGQKIVKFDFENNLIFHRTFLKLHENGMTITALDENRTELYRQTYYSIGGGFIVDEAHFGKEEKNTVQVPYPYKNAEDILKHCSDNGLMLSTVMLENEIALNGKEAVSAHLENVWKTMQACIEHGIHTEGILPGPLRVPRRAASLYRALQANTNLSNDPMRVIDWVNMFALAVNEENAAGGRVVTAPTNGACGIIPAVLAYYEKFISPLTPEIIERYLLAAGMIGSLYKMNASISGAEVGCQGEVGVACSMAAAGLAEILGGNPLQVCIAAEIAMEHNLGLTCDPVGGQVQVPCIERNAIASVKAINASRMALRRTTNPRVTLDKVIETMYETGKDMNAKYRETSQGGLAVKIVCN.

It belongs to the iron-sulfur dependent L-serine dehydratase family. [4Fe-4S] cluster is required as a cofactor.

It carries out the reaction L-serine = pyruvate + NH4(+). It participates in carbohydrate biosynthesis; gluconeogenesis. In Haemophilus influenzae (strain ATCC 51907 / DSM 11121 / KW20 / Rd), this protein is L-serine dehydratase (sdaA).